Consider the following 243-residue polypeptide: MTMRTATITEFSSSYRSLPGLLHLLQFGDSALPIGGFSFSNGLESAIQQNLVHDKETLREFTLTAMNQAATSDGIALLTAHRAARADDRGALQVIDKAVFERKLNEETRLMTVRMGRKLCELSASIIDDRLNRDWLECIKTAETPGTHPVSLGLAFAALDVDGRDAFGAQQYGVATTILGAALRLMRVSFMDTQKILLEATSTVAPAYEEIADAGIEDMASFAPMVDILAAVHVKGHVRMFMN.

This sequence belongs to the UreF family. As to quaternary structure, ureD, UreF and UreG form a complex that acts as a GTP-hydrolysis-dependent molecular chaperone, activating the urease apoprotein by helping to assemble the nickel containing metallocenter of UreC. The UreE protein probably delivers the nickel.

It localises to the cytoplasm. Functionally, required for maturation of urease via the functional incorporation of the urease nickel metallocenter. In terms of biological role, disrupting the ure2 operon has no effect on urease activity or pathogen survival in BALB/c mice when administered orally. The sequence is that of Urease accessory protein UreF 2 from Brucella abortus (strain 2308).